Here is a 383-residue protein sequence, read N- to C-terminus: Cysteine protease StiP (383 aa).

The protein belongs to the cysteine protease StiP family. In terms of processing, is probably processed via an autocatalytic removal of a proregion of about 100 amino acids.

Its activity is regulated as follows. Is inhibited by bromopyruvate in vitro. Activity is not affected by the presence of tellurite. In terms of biological role, cysteine protease that may play a role in regulating cell morphology in response to stressful conditions which likely cause oxidative damage. Appears to catalyze its own cleavage, which probably leads to its activation. The polypeptide is Cysteine protease StiP (stiP) (Acinetobacter baylyi (strain ATCC 33305 / BD413 / ADP1)).